Reading from the N-terminus, the 82-residue chain is DNA-directed RNA polymerase subunit omega (82 aa).

Belongs to the RNA polymerase subunit omega family. In terms of assembly, in cyanobacteria the RNAP catalytic core is composed of 2 alpha, 1 beta, 1 beta', 1 gamma and 1 omega subunit. When a sigma factor is associated with the core the holoenzyme is formed, which can initiate transcription.

The enzyme catalyses RNA(n) + a ribonucleoside 5'-triphosphate = RNA(n+1) + diphosphate. Functionally, promotes RNA polymerase assembly. Latches the N- and C-terminal regions of the beta' subunit thereby facilitating its interaction with the beta and alpha subunits. This Synechococcus sp. (strain CC9902) protein is DNA-directed RNA polymerase subunit omega.